A 569-amino-acid chain; its full sequence is Acyl-CoA transferase FVEG_12629 (569 aa).

It belongs to the CoA-transferase III family.

Functionally, acyl-CoA transferase; part of the Fusarium detoxification of benzoxazolinone cluster 2 (FDB2) involved in the degradation of benzoxazolinones produced by the host plant. Maize, wheat, and rye produce the 2 benzoxazinone phytoanticipins 2,4-dihy-droxy-7-methoxy-1,4-benzoxazin-3-one (DIMBOA) and 2,4-dihydroxy-1,4-benzoxazin-3-one (DIBOA) that, due to their inherent instability once released, spontaneously degrade to the more stable corresponding benzoxazolinones, 6-methoxy-2-benzoxazolinone (MBOA) and 2-benzoxazolinone (BOA), respectively. The first step in the detoxification of benzoxazolinones involves the hydrolysis of the cyclic ester bond of benzoxazolinones by the FDB1 cluster gamma-lactamase MBL1 to aminophenols. MBL1 is able to convert BOA into 2-aminophenol (2-AP), as well as MBOA into 5-methoxy-2-aminophenol (2-AMP). The FDB2 cluster N-malonyltransferase FDB2/NAT1 then metabolizes aminophenols via N-malonylation to non-toxic malonamic acids. FDB2/NAT1 converts 2-AP into N-(2-hydroxyphenyl) malonamic acid (HPMA) and 2-AMP into N-(2-hydroxy-4-methoxyphenyl) malonamic acid (HMPMA). The duplicated dienlactone hydrolases DLH1 and DLH2 may provide redundant function for hydrolyzing the lactone moiety in the BOA molecule. The roles of the amidases an other enzymes encoded by the 2 FDB clusters have not been identified so far. The chain is Acyl-CoA transferase FVEG_12629 from Gibberella moniliformis (strain M3125 / FGSC 7600) (Maize ear and stalk rot fungus).